Consider the following 1181-residue polypeptide: Cellulose synthase-like protein D5 (1181 aa).

The span at 1–17 (MVKSAASQSPSPVTITV) shows a compositional bias: polar residues. Disordered regions lie at residues 1–70 (MVKS…DEGR) and 202–229 (KEPYRDINDDPETEEEDEEDEAKPLPQM). Low complexity predominate over residues 48–59 (SSRATRRTSISS). Over residues 210–222 (DDPETEEEDEEDE) the composition is skewed to acidic residues. A run of 2 helical transmembrane segments spans residues 312–332 (AIISPYRLLIALRLVALGLFL) and 343–363 (AMWLWGMSTTCELWFALSWLL). The active site involves Asp443. Residues 497 to 542 (VRERRRVKREYDEFKVRINSLPEAIRRRSDAYNVHEELRAKKKQME) adopt a coiled-coil conformation. Residue Asp884 is part of the active site. The next 6 membrane-spanning stretches (helical) occupy residues 966–986 (LFLIVYCILPAISLFSGQFIV), 991–1011 (ITFLIYLLSITLTLCMLSLLE), 1038–1058 (PAAVLQGLLKVIAGVDISFTL), 1082–1102 (FLMVPPLTIMMVNMIAIAVGL), 1116–1136 (LVGGVFFSFWVLCHLYPFAKG), and 1146–1166 (TIVFVWSGLLSIIVSLLWVYI).

It belongs to the glycosyltransferase 2 family. Plant cellulose synthase-like D subfamily. As to expression, expressed in vascular tissues.

It localises to the golgi apparatus membrane. In terms of biological role, involved in stem and root growth. Possesses xylan and homogalacturonan synthase activity. The polypeptide is Cellulose synthase-like protein D5 (CSLD5) (Arabidopsis thaliana (Mouse-ear cress)).